Here is a 284-residue protein sequence, read N- to C-terminus: MSASSLFNLPLIRLRSLALSSSFSSFRFAHRPLSSISPRKLPNFRAFSGTAMTDTKDAGMDAVQRRLMFEDECILVDETDRVVGHDSKYNCHLMENIEAKNLLHRAFSVFLFNSKYELLLQQRSNTKVTFPLVWTNTCCSHPLYRESELIQDNALGVRNAAQRKLLDELGIVAEDVPVDEFTPLGRMLYKAPSDGKWGEHELDYLLFIVRDVKVQPNPDEVAEIKYVSREELKELVKKADAGEEGLKLSPWFRLVVDNFLMKWWDHVEKGTLVEAIDMKTIHKL.

The transit peptide at 1-45 (MSASSLFNLPLIRLRSLALSSSFSSFRFAHRPLSSISPRKLPNFR) directs the protein to the chloroplast. An N-acetylalanine modification is found at alanine 46. Residue lysine 88 participates in substrate binding. Histidine 92 and histidine 104 together coordinate Mg(2+). The Nudix hydrolase domain occupies 102–254 (LLHRAFSVFL…GLKLSPWFRL (153 aa)). Arginine 123 and lysine 127 together coordinate substrate. Cysteine 139 is a catalytic residue. Serine 140 lines the substrate pocket. Residues 140-170 (SHPLYRESELIQDNALGVRNAAQRKLLDELG) carry the Nudix box motif. Residues glutamate 199 and glutamate 201 each coordinate Mg(2+). Residue glutamate 201 is part of the active site.

The protein belongs to the IPP isomerase type 1 family. Mg(2+) is required as a cofactor.

The protein resides in the plastid. Its subcellular location is the chloroplast. It carries out the reaction isopentenyl diphosphate = dimethylallyl diphosphate. The protein operates within isoprenoid biosynthesis; dimethylallyl diphosphate biosynthesis; dimethylallyl diphosphate from isopentenyl diphosphate: step 1/1. It participates in porphyrin-containing compound metabolism; chlorophyll biosynthesis. In terms of biological role, catalyzes the 1,3-allylic rearrangement of the homoallylic substrate isopentenyl (IPP) to its highly electrophilic allylic isomer, dimethylallyl diphosphate (DMAPP). This is Isopentenyl-diphosphate Delta-isomerase II, chloroplastic (IPP2) from Arabidopsis thaliana (Mouse-ear cress).